Reading from the N-terminus, the 966-residue chain is Mitogen-activated protein kinase kinase kinase 13 (966 aa).

Disordered regions lie at residues 1–22 (MANF…SESK), 30–49 (ELTA…QQEK), and 90–114 (HDES…SGTE). Positions 95-113 (TAVSQGNSNTVDGESTSGT) are enriched in polar residues. The region spanning 168-409 (ISELQWLGSG…FRQTLMHLDI (242 aa)) is the Protein kinase domain. Residues 174–182 (LGSGAQGAV) and Lys195 contribute to the ATP site. The active-site Proton acceptor is Asp279. Leucine-zipper stretches follow at residues 433 to 454 (VKKH…DEEL) and 486 to 507 (LSAI…EQAV). Disordered regions lie at residues 534 to 599 (KRKG…RGSH), 611 to 655 (AQEN…HHPR), 744 to 834 (DIPS…RRQR), and 846 to 908 (STFS…GLSD). The span at 567-581 (SPLSGSPKMSTSSSK) shows a compositional bias: low complexity. The segment covering 582 to 594 (SRYRSKPRHRRGN) has biased composition (basic residues). Polar residues-rich tracts occupy residues 611 to 629 (AQEN…SQYP) and 785 to 795 (RSESSLGTSHL). The span at 814–827 (DSSEEEEGEVDSEV) shows a compositional bias: acidic residues. The acidic stretch occupies residues 815-828 (SSEEEEGEVDSEVE). Residues 846–855 (STFSSENFSV) are compositionally biased toward polar residues. The span at 873-887 (LADKLEDRLAEKLDD) shows a compositional bias: basic and acidic residues.

The protein belongs to the protein kinase superfamily. STE Ser/Thr protein kinase family. MAP kinase kinase kinase subfamily. Homodimer; forms dimers through the leucine-zipper motif. Interacts with the C-terminus of MAPK8IP1 through the kinase catalytic domain. Binds PRDX3. Associates with the IKK complex through the kinase domain. Mg(2+) serves as cofactor. In terms of processing, autophosphorylated on serine and threonine residues. In terms of tissue distribution, expressed in the adult brain, liver, placenta and pancreas, with expression strongest in the pancreas.

It is found in the cytoplasm. It localises to the membrane. The catalysed reaction is L-seryl-[protein] + ATP = O-phospho-L-seryl-[protein] + ADP + H(+). The enzyme catalyses L-threonyl-[protein] + ATP = O-phospho-L-threonyl-[protein] + ADP + H(+). Its activity is regulated as follows. Activated by autophosphorylation and homodimerization. In terms of biological role, activates the JUN N-terminal pathway through activation of the MAP kinase kinase MAP2K7. Acts synergistically with PRDX3 to regulate the activation of NF-kappa-B in the cytosol. This activation is kinase-dependent and involves activating the IKK complex, the IKBKB-containing complex that phosphorylates inhibitors of NF-kappa-B. This Homo sapiens (Human) protein is Mitogen-activated protein kinase kinase kinase 13.